Consider the following 475-residue polypeptide: Ribulose bisphosphate carboxylase large chain (475 aa).

Residues 1 to 2 constitute a propeptide that is removed on maturation; sequence MS. Pro3 carries the post-translational modification N-acetylproline. Lys14 carries the post-translational modification N6,N6,N6-trimethyllysine. Substrate is bound by residues Asn123 and Thr173. Catalysis depends on Lys175, which acts as the Proton acceptor. A substrate-binding site is contributed by Lys177. Mg(2+) contacts are provided by Lys201, Asp203, and Glu204. Lys201 is modified (N6-carboxylysine). The active-site Proton acceptor is the His294. The substrate site is built by Arg295, His327, and Ser379.

Belongs to the RuBisCO large chain family. Type I subfamily. As to quaternary structure, heterohexadecamer of 8 large chains and 8 small chains; disulfide-linked. The disulfide link is formed within the large subunit homodimers. The cofactor is Mg(2+). Post-translationally, the disulfide bond which can form in the large chain dimeric partners within the hexadecamer appears to be associated with oxidative stress and protein turnover.

Its subcellular location is the plastid. It is found in the chloroplast. The enzyme catalyses 2 (2R)-3-phosphoglycerate + 2 H(+) = D-ribulose 1,5-bisphosphate + CO2 + H2O. It carries out the reaction D-ribulose 1,5-bisphosphate + O2 = 2-phosphoglycolate + (2R)-3-phosphoglycerate + 2 H(+). In terms of biological role, ruBisCO catalyzes two reactions: the carboxylation of D-ribulose 1,5-bisphosphate, the primary event in carbon dioxide fixation, as well as the oxidative fragmentation of the pentose substrate in the photorespiration process. Both reactions occur simultaneously and in competition at the same active site. The chain is Ribulose bisphosphate carboxylase large chain from Picea abies (Norway spruce).